The sequence spans 237 residues: Probable glutathione-independent glyoxalase HSP32 (237 aa).

Active-site residues include Cys-138, His-139, and Glu-170.

It belongs to the peptidase C56 family. HSP31-like subfamily. Homodimer.

The protein resides in the cytoplasm. It localises to the P-body. The catalysed reaction is methylglyoxal + H2O = (R)-lactate + H(+). Catalyzes the conversion of methylglyoxal (MG) to D-lactate in a single glutathione (GSH)-independent step. May play a role in detoxifying endogenously produced glyoxals. Involved in protection against reactive oxygen species (ROS). Important for viability in stationary phase. May negatively regulate TORC1 in response to nutrient limitation. The sequence is that of Probable glutathione-independent glyoxalase HSP32 from Saccharomyces cerevisiae (strain ATCC 204508 / S288c) (Baker's yeast).